The primary structure comprises 168 residues: Small ribosomal subunit protein uS9 (168 aa).

Over residues Met-1–Glu-15 the composition is skewed to acidic residues. Residues Met-1 to Lys-34 are disordered.

This sequence belongs to the universal ribosomal protein uS9 family.

This chain is Small ribosomal subunit protein uS9, found in Arthrobacter sp. (strain FB24).